We begin with the raw amino-acid sequence, 921 residues long: GPI ethanolamine phosphate transferase 1 (921 aa).

The chain crosses the membrane as a helical span at residues 37 to 57 (PGHVALIAGLYEDVSAVTTGW). N-linked (GlcNAc...) asparagine glycosylation is found at Asn69 and Asn132. 10 helical membrane passes run 386-406 (ALITIGYLGWVAYALTTVIDL), 418-438 (TLIGTIISTSALTALYASFAI), 441-461 (SPLTYYAYAFFPVFFWEEVYA), 483-503 (FVSLVFNCAVYVGIIESLALG), 509-529 (ILTILFVIGAFWPIAYGFSFL), 533-553 (MALSITWFLSCIAMSTFTLLP), 561-581 (VNMIMLGGALMVLVGIIYLIL), 606-626 (LVGIQIGLTLLAALVTRSSAL), 640-660 (VMGWVVLVVSLLMPLAYRAKP), and 679-699 (FVILTISYEGLFYIAFSAVLV). Residues 715 to 737 (SANGAARSAPSPAKPHNLETSQT) are disordered. Transmembrane regions (helical) follow at residues 752–772 (VALFFFVLFQAAFFSTGNVAS), 795–815 (AMLILKLLIPFALISANLGIL), 825–845 (ALFMVVMAISDILTLYFFWVV), and 862–882 (VIASLLCVFVAALEGVSAMFI).

It belongs to the PIGG/PIGN/PIGO family. PIGN subfamily.

The protein resides in the endoplasmic reticulum membrane. The protein operates within glycolipid biosynthesis; glycosylphosphatidylinositol-anchor biosynthesis. Ethanolamine phosphate transferase involved in glycosylphosphatidylinositol-anchor biosynthesis. Transfers ethanolamine phosphate to the first alpha-1,4-linked mannose of the glycosylphosphatidylinositol precursor of GPI-anchor. The polypeptide is GPI ethanolamine phosphate transferase 1 (MCD4) (Chaetomium globosum (strain ATCC 6205 / CBS 148.51 / DSM 1962 / NBRC 6347 / NRRL 1970) (Soil fungus)).